The chain runs to 173 residues: MNQHPNKPIFKVGIGYDVHKFDNTCYNDANTFITICGIKINYHKKIIAHSDGDVGLHALTDAILGAVGCGSIGQHFPNTDNTWKNIKSDYFLIEAQKKAQEKGYSISNADITIICEQPKIMPHALEMQEYIANLICIDPSCINVKATTTEKLGFLGRKEGIAAQAIVLCCLQN.

A divalent metal cation contacts are provided by Asp-17 and His-19. Residues 17–19 and 49–50 each bind 4-CDP-2-C-methyl-D-erythritol 2-phosphate; these read DVH and HS. His-57 contacts a divalent metal cation. 4-CDP-2-C-methyl-D-erythritol 2-phosphate contacts are provided by residues 76–80, 147–150, Phe-154, and Arg-157; these read FPNTD and TTTE.

It belongs to the IspF family. Homotrimer. The cofactor is a divalent metal cation.

It carries out the reaction 4-CDP-2-C-methyl-D-erythritol 2-phosphate = 2-C-methyl-D-erythritol 2,4-cyclic diphosphate + CMP. It participates in isoprenoid biosynthesis; isopentenyl diphosphate biosynthesis via DXP pathway; isopentenyl diphosphate from 1-deoxy-D-xylulose 5-phosphate: step 4/6. Involved in the biosynthesis of isopentenyl diphosphate (IPP) and dimethylallyl diphosphate (DMAPP), two major building blocks of isoprenoid compounds. Catalyzes the conversion of 4-diphosphocytidyl-2-C-methyl-D-erythritol 2-phosphate (CDP-ME2P) to 2-C-methyl-D-erythritol 2,4-cyclodiphosphate (ME-CPP) with a corresponding release of cytidine 5-monophosphate (CMP). This is 2-C-methyl-D-erythritol 2,4-cyclodiphosphate synthase from Ehrlichia chaffeensis (strain ATCC CRL-10679 / Arkansas).